The primary structure comprises 274 residues: Ribulose-phosphate 3-epimerase, chloroplastic (274 aa).

The transit peptide at 1-39 directs the protein to the chloroplast; sequence MASPSSSSSLCSTFASPRAASLGRRLAFSSPRKAFRVRA. Ser-56 contacts substrate. Positions 81, 83, and 114 each coordinate a divalent metal cation. The active-site Proton acceptor is Asp-83. Substrate contacts are provided by residues His-114, 192 to 195, 225 to 227, and 247 to 248; these read GFGG, DGG, and GS. An a divalent metal cation-binding site is contributed by Asp-225. Asp-225 functions as the Proton donor in the catalytic mechanism.

This sequence belongs to the ribulose-phosphate 3-epimerase family. In terms of assembly, homooctamer. Co(2+) is required as a cofactor. It depends on Fe(2+) as a cofactor. Mn(2+) serves as cofactor. Requires Zn(2+) as cofactor.

It localises to the plastid. The protein resides in the chloroplast thylakoid membrane. It catalyses the reaction D-ribulose 5-phosphate = D-xylulose 5-phosphate. The protein operates within carbohydrate biosynthesis; Calvin cycle. In terms of biological role, catalyzes the reversible epimerization of D-ribulose 5-phosphate to D-xylulose 5-phosphate. The chain is Ribulose-phosphate 3-epimerase, chloroplastic (RPE) from Oryza sativa subsp. japonica (Rice).